The chain runs to 813 residues: Striatin-interacting protein 1 homolog (813 aa).

Disordered regions lie at residues 1-41 (MDGV…SEAP) and 307-379 (RAAS…RDEV). A compositionally biased stretch (polar residues) spans 9 to 18 (NNKQKQNQML). Over residues 22-35 (MRGEFTRNQRKDSE) the composition is skewed to basic and acidic residues. The segment covering 307-316 (RAASPPASAS) has biased composition (low complexity). Phosphoserine is present on S310. Residues 331–352 (KALIKQDNLDTFNEKDPYKADD) are compositionally biased toward basic and acidic residues. A compositionally biased stretch (acidic residues) spans 353–367 (SHEDEEENDDNDNSL).

It belongs to the STRIP family. Part of the core of STRIPAK complexes composed of PP2A catalytic and scaffolding subunits, the striatins (PP2A regulatory subunits), the striatin-associated proteins MOB4, STRIP1 and STRIP2, PDCD10 and members of the STE20 kinases, such as STK24 and STK26.

Its subcellular location is the cytoplasm. In terms of biological role, plays a role in the regulation of cell morphology and cytoskeletal organization. Required in the cortical actin filament dynamics and cell shape. Part of the striatin-interacting phosphatase and kinase (STRIPAK) complexes. STRIPAK complexes have critical roles in protein (de)phosphorylation and are regulators of multiple signaling pathways including Hippo, MAPK, nuclear receptor and cytoskeleton remodeling. Different types of STRIPAK complexes are involved in a variety of biological processes such as cell growth, differentiation, apoptosis, metabolism and immune regulation. This is Striatin-interacting protein 1 homolog (strip1) from Danio rerio (Zebrafish).